The sequence spans 256 residues: 5'-nucleotidase SurE (256 aa).

Residues aspartate 8, aspartate 9, serine 40, and asparagine 92 each coordinate a divalent metal cation.

Belongs to the SurE nucleotidase family. A divalent metal cation is required as a cofactor.

The protein localises to the cytoplasm. The catalysed reaction is a ribonucleoside 5'-phosphate + H2O = a ribonucleoside + phosphate. Functionally, nucleotidase that shows phosphatase activity on nucleoside 5'-monophosphates. In Rhizobium meliloti (strain 1021) (Ensifer meliloti), this protein is 5'-nucleotidase SurE.